Consider the following 456-residue polypeptide: MLKVAIVGKPNVGKSTLFNRLIKNRIAIVDDTPGITRDRIFGDVEWLTKRFQIIDTGGLTTESDVFQRAIEQQVQFAIDEADIILFVCSYKEGINADDHYAAKLLKKHKNKKIIFVLNKIENQNKDQLNLSSYFSLGFGKPMIISAEHAIGIGDLLDEIIGLKDQFGNKKEQELVATFCIIGKPNVGKSSLLNQLLKKERVLVSDIPGTTRDAIDATFSYNKELYKVIDTAGIRRKGKIATRIEKFSVQRTQQAISRSKMILLMLDGSVDLSEQDEVIGGLCYEANLPTIIVVNKWDLVKKDDKTMELFKKQIRSKFKYLPWSPIIFISAKANLRIDTIFQTIKLIQAQLKIKISTSLLNDVVQKAHMINQPPIFNGNRLSITYTTQAQGQIPTFVLFCNNPDYLHFSYARYLENKIREAFGLSYVPITLYFKSKNARNRKLSKDVKFKQTGYDLE.

EngA-type G domains lie at 2–167 (LKVA…DQFG) and 176–351 (ATFC…AQLK). Residues 8 to 15 (GKPNVGKS), 55 to 59 (DTGGL), 118 to 121 (NKIE), 182 to 189 (GKPNVGKS), 229 to 233 (DTAGI), and 294 to 297 (NKWD) each bind GTP. The KH-like domain occupies 352–436 (IKISTSLLND…PITLYFKSKN (85 aa)).

This sequence belongs to the TRAFAC class TrmE-Era-EngA-EngB-Septin-like GTPase superfamily. EngA (Der) GTPase family. In terms of assembly, associates with the 50S ribosomal subunit.

In terms of biological role, GTPase that plays an essential role in the late steps of ribosome biogenesis. This is GTPase Der from Mycoplasmoides gallisepticum (strain R(low / passage 15 / clone 2)) (Mycoplasma gallisepticum).